Consider the following 101-residue polypeptide: Protein Tat (101 aa).

The segment at 1–24 (MEPVDPNREPWNHPGSQPKTACTN) is interaction with human CREBBP. Residues 1 to 48 (MEPVDPNREPWNHPGSQPKTACTNCYCKKCCYHCQVCFLQKGLGISYG) are transactivation. Zn(2+) contacts are provided by Cys22, Cys25, and Cys27. Residues 22-37 (CTNCYCKKCCYHCQVC) are cysteine-rich. Residue Lys28 is modified to N6-acetyllysine; by host PCAF. Zn(2+) is bound by residues Cys30, His33, Cys34, and Cys37. Residues 38–48 (FLQKGLGISYG) form a core region. Residues 48 to 101 (GRKKRRQRRSAPPGSKNHQDLIPEQPLFQTQRKPTGPEESKKEVESKAEPDRFD) form a disordered region. Positions 49-57 (RKKRRQRRS) match the Nuclear localization signal, RNA-binding (TAR), and protein transduction motif. Residues 49 to 86 (RKKRRQRRSAPPGSKNHQDLIPEQPLFQTQRKPTGPEE) are interaction with the host capping enzyme RNGTT. N6-acetyllysine; by host EP300 and GCN5L2 occurs at positions 50 and 51. Asymmetric dimethylarginine; by host PRMT6 is present on residues Arg52 and Arg53. Positions 82–101 (TGPEESKKEVESKAEPDRFD) are enriched in basic and acidic residues.

Belongs to the lentiviruses Tat family. As to quaternary structure, interacts with host CCNT1. Associates with the P-TEFb complex composed at least of Tat, P-TEFb (CDK9 and CCNT1), TAR RNA, RNA Pol II. Recruits the HATs CREBBP, TAF1/TFIID, EP300, PCAF and GCN5L2. Interacts with host KAT5/Tip60; this interaction targets the latter to degradation. Interacts with the host deacetylase SIRT1. Interacts with host capping enzyme RNGTT; this interaction stimulates RNGTT. Binds to host KDR, and to the host integrins ITGAV/ITGB3 and ITGA5/ITGB1. Interacts with host KPNB1/importin beta-1 without previous binding to KPNA1/importin alpha-1. Interacts with EIF2AK2. Interacts with host nucleosome assembly protein NAP1L1; this interaction may be required for the transport of Tat within the nucleus, since the two proteins interact at the nuclear rim. Interacts with host C1QBP/SF2P32; this interaction involves lysine-acetylated Tat. Interacts with the host chemokine receptors CCR2, CCR3 and CXCR4. Interacts with host DPP4/CD26; this interaction may trigger an anti-proliferative effect. Interacts with host LDLR. Interacts with the host extracellular matrix metalloproteinase MMP1. Interacts with host PRMT6; this interaction mediates Tat's methylation. Interacts with, and is ubiquitinated by MDM2/Hdm2. Interacts with host PSMC3 and HTATIP2. Interacts with STAB1; this interaction may overcome SATB1-mediated repression of IL2 and IL2RA (interleukin) in T cells by binding to the same domain than HDAC1. Interacts (when acetylated) with human CDK13, thereby increasing HIV-1 mRNA splicing and promoting the production of the doubly spliced HIV-1 protein Nef. Interacts with host TBP; this interaction modulates the activity of transcriptional pre-initiation complex. Interacts with host RELA. Interacts with host PLSCR1; this interaction negatively regulates Tat transactivation activity by altering its subcellular distribution. Post-translationally, asymmetrical arginine methylation by host PRMT6 seems to diminish the transactivation capacity of Tat and affects the interaction with host CCNT1. Acetylation by EP300, CREBBP, GCN5L2/GCN5 and PCAF regulates the transactivation activity of Tat. EP300-mediated acetylation of Lys-50 promotes dissociation of Tat from the TAR RNA through the competitive binding to PCAF's bromodomain. In addition, the non-acetylated Tat's N-terminus can also interact with PCAF. PCAF-mediated acetylation of Lys-28 enhances Tat's binding to CCNT1. Lys-50 is deacetylated by SIRT1. In terms of processing, polyubiquitination by host MDM2 does not target Tat to degradation, but activates its transactivation function and fosters interaction with CCNT1 and TAR RNA. Post-translationally, phosphorylated by EIF2AK2 on serine and threonine residues adjacent to the basic region important for TAR RNA binding and function. Phosphorylation of Tat by EIF2AK2 is dependent on the prior activation of EIF2AK2 by dsRNA.

It localises to the host nucleus. Its subcellular location is the host nucleolus. The protein localises to the host cytoplasm. The protein resides in the secreted. Its function is as follows. Transcriptional activator that increases RNA Pol II processivity, thereby increasing the level of full-length viral transcripts. Recognizes a hairpin structure at the 5'-LTR of the nascent viral mRNAs referred to as the transactivation responsive RNA element (TAR) and recruits the cyclin T1-CDK9 complex (P-TEFb complex) that will in turn hyperphosphorylate the RNA polymerase II to allow efficient elongation. The CDK9 component of P-TEFb and other Tat-activated kinases hyperphosphorylate the C-terminus of RNA Pol II that becomes stabilized and much more processive. Other factors such as HTATSF1/Tat-SF1, SUPT5H/SPT5, and HTATIP2 are also important for Tat's function. Besides its effect on RNA Pol II processivity, Tat induces chromatin remodeling of proviral genes by recruiting the histone acetyltransferases (HATs) CREBBP, EP300 and PCAF to the chromatin. This also contributes to the increase in proviral transcription rate, especially when the provirus integrates in transcriptionally silent region of the host genome. To ensure maximal activation of the LTR, Tat mediates nuclear translocation of NF-kappa-B by interacting with host RELA. Through its interaction with host TBP, Tat may also modulate transcription initiation. Tat can reactivate a latently infected cell by penetrating in it and transactivating its LTR promoter. In the cytoplasm, Tat is thought to act as a translational activator of HIV-1 mRNAs. Functionally, extracellular circulating Tat can be endocytosed by surrounding uninfected cells via the binding to several surface receptors such as CD26, CXCR4, heparan sulfate proteoglycans (HSPG) or LDLR. Neurons are rarely infected, but they internalize Tat via their LDLR. Through its interaction with nuclear HATs, Tat is potentially able to control the acetylation-dependent cellular gene expression. Modulates the expression of many cellular genes involved in cell survival, proliferation or in coding for cytokines or cytokine receptors. Tat plays a role in T-cell and neurons apoptosis. Tat induced neurotoxicity and apoptosis probably contribute to neuroAIDS. Circulating Tat also acts as a chemokine-like and/or growth factor-like molecule that binds to specific receptors on the surface of the cells, affecting many cellular pathways. In the vascular system, Tat binds to ITGAV/ITGB3 and ITGA5/ITGB1 integrins dimers at the surface of endothelial cells and competes with bFGF for heparin-binding sites, leading to an excess of soluble bFGF. The polypeptide is Protein Tat (Human immunodeficiency virus type 1 group M subtype J (isolate SE9173) (HIV-1)).